Consider the following 204-residue polypeptide: Inner membrane-spanning protein YciB (204 aa).

The next 6 helical transmembrane spans lie at 3–23 (AEISPLLKFVLELGPLMVFFF), 45–65 (IFIATGLFMIATATALTVSWI), 70–90 (LPIMPLISGIVVFVFGALTLW), 107–127 (LFGVILLGGLFFGQSLLGYVF), 145–165 (WGVFFLFLAVLNEVVWRMFTT), and 168–188 (WVAFKVWGTMPITIIFTMAQM).

The protein belongs to the YciB family.

It is found in the cell inner membrane. Its function is as follows. Plays a role in cell envelope biogenesis, maintenance of cell envelope integrity and membrane homeostasis. The chain is Inner membrane-spanning protein YciB from Agrobacterium fabrum (strain C58 / ATCC 33970) (Agrobacterium tumefaciens (strain C58)).